Consider the following 428-residue polypeptide: Protein clpf-1 (428 aa).

ATP contacts are provided by residues Glu-16, Arg-56, and 124–129 (DVGKTT).

This sequence belongs to the Clp1 family. Clp1 subfamily.

The protein resides in the nucleus. Its function is as follows. Required for endonucleolytic cleavage during polyadenylation-dependent pre-mRNA 3'-end formation. The sequence is that of Protein clpf-1 from Caenorhabditis elegans.